The primary structure comprises 129 residues: Small ribosomal subunit protein uS9 (129 aa).

The segment at 108-129 (RMVERKKYGKKKARKSFQFSKR) is disordered. Over residues 114 to 129 (KYGKKKARKSFQFSKR) the composition is skewed to basic residues.

Belongs to the universal ribosomal protein uS9 family.

This Chlorobaculum tepidum (strain ATCC 49652 / DSM 12025 / NBRC 103806 / TLS) (Chlorobium tepidum) protein is Small ribosomal subunit protein uS9.